We begin with the raw amino-acid sequence, 261 residues long: Thioesterase AMT4 (261 aa).

It belongs to the AMT4 thioesterase family.

It functions in the pathway mycotoxin biosynthesis. In terms of biological role, thioesterase; part of the gene clusters that mediate the biosynthesis of AM-toxins, host-selective toxins (HSTs) causing Alternaria blotch on apple, a worldwide distributed disease. AM-toxins are cyclic depsipeptides containing the 3 residues 2-hydroxy-isovaleric acid (2-HIV), dehydroalanine, L-alanine which are common for all 3 AM-toxins I to III. The fourth precursor is L-alpha-amino-methoxyphenyl-valeric acid (L-Amv) for AM-toxin I, L-alpha-amino-phenyl-valeric acid (L-Apv) for AM-toxin II, and L-alpha-amino-hydroxyphenyl-valeric acid (L-Ahv) for AM-toxin III. AM-toxins have two target sites for affecting susceptible apple cells; they cause invagination of the plasma membrane and electrolyte loss and chloroplast disorganization. The non-ribosomal peptide synthetase AMT1 contains 4 catalytic modules and is responsible for activation of each residue in AM-toxin. The aldo-keto reductase AMT2 catalyzes the conversion of 2-keto-isovaleric acid (2-KIV) to 2-hydroxy-isovaleric acid (2-HIV), one of the precursor residues incorporated by AMT1 during AM-toxin biosynthesis, by reduction of its ketone to an alcohol. The cytochrome P450 monooxygenase AMT3 and the thioesterase AMT4 are also important for AM-toxin production, but their exact function within the AM-toxin biosynthesis are not known yet. Up to 21 proteins (including AMT1 to AMT4) are predicted to be involved in AM-toxin biosynthesis since their expression ishighly up-regulated in AM-toxin-producing cultures. The protein is Thioesterase AMT4 of Alternaria alternata (Alternaria rot fungus).